Reading from the N-terminus, the 276-residue chain is Protein MGF 360-15R (276 aa).

The protein belongs to the asfivirus MGF 360 family.

Plays a role in virus cell tropism, and may be required for efficient virus replication in macrophages. This is Protein MGF 360-15R from African swine fever virus (isolate Tick/South Africa/Pretoriuskop Pr4/1996) (ASFV).